The following is a 365-amino-acid chain: UDP-N-acetylglucosamine--N-acetylmuramyl-(pentapeptide) pyrophosphoryl-undecaprenol N-acetylglucosamine transferase (365 aa).

Residues 19 to 21 (TGG), asparagine 131, arginine 170, serine 201, isoleucine 255, 274 to 279 (ALTVTE), and glutamine 300 each bind UDP-N-acetyl-alpha-D-glucosamine.

This sequence belongs to the glycosyltransferase 28 family. MurG subfamily.

It localises to the cell inner membrane. The enzyme catalyses di-trans,octa-cis-undecaprenyl diphospho-N-acetyl-alpha-D-muramoyl-L-alanyl-D-glutamyl-meso-2,6-diaminopimeloyl-D-alanyl-D-alanine + UDP-N-acetyl-alpha-D-glucosamine = di-trans,octa-cis-undecaprenyl diphospho-[N-acetyl-alpha-D-glucosaminyl-(1-&gt;4)]-N-acetyl-alpha-D-muramoyl-L-alanyl-D-glutamyl-meso-2,6-diaminopimeloyl-D-alanyl-D-alanine + UDP + H(+). Its pathway is cell wall biogenesis; peptidoglycan biosynthesis. In terms of biological role, cell wall formation. Catalyzes the transfer of a GlcNAc subunit on undecaprenyl-pyrophosphoryl-MurNAc-pentapeptide (lipid intermediate I) to form undecaprenyl-pyrophosphoryl-MurNAc-(pentapeptide)GlcNAc (lipid intermediate II). The protein is UDP-N-acetylglucosamine--N-acetylmuramyl-(pentapeptide) pyrophosphoryl-undecaprenol N-acetylglucosamine transferase of Acinetobacter baumannii (strain ATCC 17978 / DSM 105126 / CIP 53.77 / LMG 1025 / NCDC KC755 / 5377).